Reading from the N-terminus, the 586-residue chain is Major facilitator superfamily domain-containing protein 6-like (586 aa).

2 helical membrane-spanning segments follow: residues 50–70 and 78–98; these read ILMG…AFLA and MFLT…VLVP. Residues 218–237 are disordered; that stretch reads GPVNLSKPQGDTQTPDHSSK. The segment covering 223 to 237 has biased composition (polar residues); the sequence is SKPQGDTQTPDHSSK. 9 helical membrane passes run 240-260, 284-304, 318-338, 365-385, 397-417, 428-448, 454-474, 494-514, and 519-538; these read PWTF…AAPL, LWVW…ALVG, VIYF…STAF, LILL…VQDF, ELVM…FHPF, VGVL…YAFI, VLPV…AVGA, GHFY…VVLH, and VLYE…FLSI.

This sequence belongs to the major facilitator superfamily. MFSD6 family.

It is found in the membrane. This Mus musculus (Mouse) protein is Major facilitator superfamily domain-containing protein 6-like (Mfsd6l).